The primary structure comprises 578 residues: Zinc finger-containing ubiquitin peptidase 1 (578 aa).

The segment at 2-24 adopts a C2H2-type 1 zinc-finger fold; that stretch reads LSCNICGETVTSEPDMKAHLIVH. Residues 29–52 form a C2H2-type 2; atypical zinc finger; the sequence is IICPFCKLSGVNYDEMCFHIETAH. C2H2-type zinc fingers lie at residues 154–177 and 193–215; these read PECP…KTKH and YDCP…VDLH. Residues 226–248 form an MIU region; the sequence is DRVQCSGDLQLAHQLQQEEDRKR. Residues 249-274 are zUBD/ZHA; it reads RSEESRQEIEEFQKLQRQYGLDNSGG. The residue at position 262 (Lys262) is an N6-acetyllysine. The Nucleophile role is filled by Cys360. Catalysis depends on His491, which acts as the Proton acceptor. Asp512 is a catalytic residue.

It belongs to the peptidase C78 family. ZUFSP subfamily. Interacts with RPA1 and RPA2.

The protein resides in the cytoplasm. It is found in the nucleus. It catalyses the reaction Thiol-dependent hydrolysis of ester, thioester, amide, peptide and isopeptide bonds formed by the C-terminal Gly of ubiquitin (a 76-residue protein attached to proteins as an intracellular targeting signal).. Functionally, deubiquitinase with endodeubiquitinase activity that specifically interacts with and cleaves 'Lys-63'-linked long polyubiquitin chains. Shows only weak activity against 'Lys-11' and 'Lys-48'-linked chains. Plays an important role in genome stability pathways, functioning to prevent spontaneous DNA damage and also promote cellular survival in response to exogenous DNA damage. Modulates the ubiquitination status of replication protein A (RPA) complex proteins in response to replication stress. The chain is Zinc finger-containing ubiquitin peptidase 1 from Homo sapiens (Human).